A 29-amino-acid polypeptide reads, in one-letter code: Acidic phospholipase A2 Omo-E6 (29 aa).

Ca(2+) contacts are provided by Tyr27 and Gly29.

It depends on Ca(2+) as a cofactor. Expressed by the venom gland.

It localises to the secreted. The enzyme catalyses a 1,2-diacyl-sn-glycero-3-phosphocholine + H2O = a 1-acyl-sn-glycero-3-phosphocholine + a fatty acid + H(+). Its function is as follows. Snake venom phospholipase A2 (PLA2) that inhibits the ADP- and collagen-induced human platelet aggregation. Exhibits strong hydrolytic activities and prefers the anionic micelles (dPPC with deoxycholate) to the zwitterionic micelles (dPPC with Triton X-100). PLA2 catalyzes the calcium-dependent hydrolysis of the 2-acyl groups in 3-sn-phosphoglycerides. The protein is Acidic phospholipase A2 Omo-E6 of Ovophis monticola (Chinese mountain pitviper).